Reading from the N-terminus, the 443-residue chain is Glutamate-1-semialdehyde 2,1-aminomutase (443 aa).

Lysine 281 is modified (N6-(pyridoxal phosphate)lysine).

It belongs to the class-III pyridoxal-phosphate-dependent aminotransferase family. HemL subfamily. Homodimer. Requires pyridoxal 5'-phosphate as cofactor.

The protein resides in the cytoplasm. It carries out the reaction (S)-4-amino-5-oxopentanoate = 5-aminolevulinate. It functions in the pathway porphyrin-containing compound metabolism; protoporphyrin-IX biosynthesis; 5-aminolevulinate from L-glutamyl-tRNA(Glu): step 2/2. The protein is Glutamate-1-semialdehyde 2,1-aminomutase of Leptospira interrogans serogroup Icterohaemorrhagiae serovar Lai (strain 56601).